The sequence spans 485 residues: N-succinylglutamate 5-semialdehyde dehydrogenase (485 aa).

220–225 lines the NAD(+) pocket; that stretch reads GSANTG. Residues Glu243 and Cys278 contribute to the active site.

It belongs to the aldehyde dehydrogenase family. AstD subfamily.

The enzyme catalyses N-succinyl-L-glutamate 5-semialdehyde + NAD(+) + H2O = N-succinyl-L-glutamate + NADH + 2 H(+). It functions in the pathway amino-acid degradation; L-arginine degradation via AST pathway; L-glutamate and succinate from L-arginine: step 4/5. Catalyzes the NAD-dependent reduction of succinylglutamate semialdehyde into succinylglutamate. The polypeptide is N-succinylglutamate 5-semialdehyde dehydrogenase (Aliivibrio salmonicida (strain LFI1238) (Vibrio salmonicida (strain LFI1238))).